The primary structure comprises 1222 residues: ATP-dependent helicase/nuclease subunit A (1222 aa).

The 457-residue stretch at 39–495 (QKRTAQQIEA…ILLKENFRSQ (457 aa)) folds into the UvrD-like helicase ATP-binding domain. 60-67 (ASAGSGKT) is an ATP binding site. Residues 524 to 810 (QLIAGSHAQT…NLMTIHKSKG (287 aa)) enclose the UvrD-like helicase C-terminal domain.

This sequence belongs to the helicase family. AddA subfamily. As to quaternary structure, heterodimer of AddA and AddB/RexB. It depends on Mg(2+) as a cofactor.

It carries out the reaction Couples ATP hydrolysis with the unwinding of duplex DNA by translocating in the 3'-5' direction.. The catalysed reaction is ATP + H2O = ADP + phosphate + H(+). Functionally, the heterodimer acts as both an ATP-dependent DNA helicase and an ATP-dependent, dual-direction single-stranded exonuclease. Recognizes the chi site generating a DNA molecule suitable for the initiation of homologous recombination. The AddA nuclease domain is required for chi fragment generation; this subunit has the helicase and 3' -&gt; 5' nuclease activities. This chain is ATP-dependent helicase/nuclease subunit A, found in Streptococcus pyogenes serotype M4 (strain MGAS10750).